The following is a 529-amino-acid chain: Cytochrome P450 monooxygenase ausG (529 aa).

The helical transmembrane segment at 31–51 (FLVTCGLPWLLLLFSVTIILF) threads the bilayer. Heme is bound at residue C470.

The protein belongs to the cytochrome P450 family. Heme serves as cofactor.

It is found in the membrane. It functions in the pathway secondary metabolite biosynthesis; terpenoid biosynthesis. In terms of biological role, cytochrome P450 monooxygenase; part of the gene cluster B that mediates the biosynthesis of austinol and dehydroaustinol, two fungal meroterpenoids. The first step of the pathway is the synthesis of 3,5-dimethylorsellinic acid by the polyketide synthase ausA. 3,5-dimethylorsellinic acid is then prenylated by the polyprenyl transferase ausN. Further epoxidation by the FAD-dependent monooxygenase ausM and cyclization by the probable terpene cyclase ausL lead to the formation of protoaustinoid A. Protoaustinoid A is then oxidized to spiro-lactone preaustinoid A3 by the combined action of the FAD-binding monooxygenases ausB and ausC, and the dioxygenase ausE. Acid-catalyzed keto-rearrangement and ring contraction of the tetraketide portion of preaustinoid A3 by ausJ lead to the formation of preaustinoid A4. The aldo-keto reductase ausK, with the help of ausH, is involved in the next step by transforming preaustinoid A4 into isoaustinone which is in turn hydroxylated by the P450 monooxygenase ausI to form austinolide. Finally, the cytochrome P450 monooxygenase ausG modifies austinolide to austinol. Austinol can be further modified to dehydroaustinol which forms a diffusible complex with diorcinol that initiates conidiation. Due to genetic rearrangements of the clusters and the subsequent loss of some enzymes, the end products of the Emericella nidulans austinoid biosynthesis clusters are austinol and dehydroaustinol, even if additional enzymes, such as the O-acetyltransferase ausQ and the cytochrome P450 monooxygenase ausR are still functional. The sequence is that of Cytochrome P450 monooxygenase ausG from Emericella nidulans (strain FGSC A4 / ATCC 38163 / CBS 112.46 / NRRL 194 / M139) (Aspergillus nidulans).